The chain runs to 126 residues: Holo-[acyl-carrier-protein] synthase (126 aa).

Positions 9 and 58 each coordinate Mg(2+).

Belongs to the P-Pant transferase superfamily. AcpS family. Requires Mg(2+) as cofactor.

It is found in the cytoplasm. The catalysed reaction is apo-[ACP] + CoA = holo-[ACP] + adenosine 3',5'-bisphosphate + H(+). Its function is as follows. Transfers the 4'-phosphopantetheine moiety from coenzyme A to a Ser of acyl-carrier-protein. This Salmonella agona (strain SL483) protein is Holo-[acyl-carrier-protein] synthase.